Reading from the N-terminus, the 318-residue chain is 1-phosphofructokinase (318 aa).

ATP contacts are provided by residues 228–233 and 259–260; these read SMGTEG and GD. The Proton acceptor role is filled by Asp-260.

It belongs to the carbohydrate kinase PfkB family.

It carries out the reaction beta-D-fructose 1-phosphate + ATP = beta-D-fructose 1,6-bisphosphate + ADP + H(+). In terms of biological role, catalyzes the ATP-dependent phosphorylation of fructose-l-phosphate to fructose-l,6-bisphosphate. This Xanthomonas campestris pv. campestris (strain ATCC 33913 / DSM 3586 / NCPPB 528 / LMG 568 / P 25) protein is 1-phosphofructokinase.